The primary structure comprises 279 residues: 2-dehydro-3-deoxyphosphooctonate aldolase (279 aa).

This sequence belongs to the KdsA family.

Its subcellular location is the cytoplasm. It carries out the reaction D-arabinose 5-phosphate + phosphoenolpyruvate + H2O = 3-deoxy-alpha-D-manno-2-octulosonate-8-phosphate + phosphate. It participates in carbohydrate biosynthesis; 3-deoxy-D-manno-octulosonate biosynthesis; 3-deoxy-D-manno-octulosonate from D-ribulose 5-phosphate: step 2/3. Its pathway is bacterial outer membrane biogenesis; lipopolysaccharide biosynthesis. The protein is 2-dehydro-3-deoxyphosphooctonate aldolase of Bartonella henselae (strain ATCC 49882 / DSM 28221 / CCUG 30454 / Houston 1) (Rochalimaea henselae).